We begin with the raw amino-acid sequence, 67 residues long: Large ribosomal subunit protein uL29 (67 aa).

The protein belongs to the universal ribosomal protein uL29 family.

The chain is Large ribosomal subunit protein uL29 from Solibacter usitatus (strain Ellin6076).